Here is a 360-residue protein sequence, read N- to C-terminus: Phosphoserine aminotransferase (360 aa).

R41 is an L-glutamate binding site. Positions 101, 152, 172, and 195 each coordinate pyridoxal 5'-phosphate. At K196 the chain carries N6-(pyridoxal phosphate)lysine. Pyridoxal 5'-phosphate is bound at residue 237–238; sequence NT.

The protein belongs to the class-V pyridoxal-phosphate-dependent aminotransferase family. SerC subfamily. Homodimer. Pyridoxal 5'-phosphate is required as a cofactor.

Its subcellular location is the cytoplasm. It carries out the reaction O-phospho-L-serine + 2-oxoglutarate = 3-phosphooxypyruvate + L-glutamate. The enzyme catalyses 4-(phosphooxy)-L-threonine + 2-oxoglutarate = (R)-3-hydroxy-2-oxo-4-phosphooxybutanoate + L-glutamate. It participates in amino-acid biosynthesis; L-serine biosynthesis; L-serine from 3-phospho-D-glycerate: step 2/3. It functions in the pathway cofactor biosynthesis; pyridoxine 5'-phosphate biosynthesis; pyridoxine 5'-phosphate from D-erythrose 4-phosphate: step 3/5. In terms of biological role, catalyzes the reversible conversion of 3-phosphohydroxypyruvate to phosphoserine and of 3-hydroxy-2-oxo-4-phosphonooxybutanoate to phosphohydroxythreonine. The polypeptide is Phosphoserine aminotransferase (Burkholderia ambifaria (strain MC40-6)).